Consider the following 132-residue polypeptide: 3'-dehydrocarminate deglycosidase beta subunit (132 aa).

It belongs to the C-glycoside deglycosidase beta subunit family. In terms of assembly, heterodimer composed of an alpha subunit (CarB) and a beta subunit (CarC). Mg(2+) serves as cofactor.

The catalysed reaction is 3'-dehydrocarminate + H(+) = kermesate + 1,5-anhydro-D-erythro-hex-1-en-3-ulose. With respect to regulation, activity is strongly reduced in the presence of chelating agents. Carbon-carbon bond-cleaving enzyme which participates in a carminate degradation pathway. Cleaves the C-C bond in 3'-dehydrocarminate to form kermesate. Also shows weak activity with other C-glycosides, such as 3''-dehydropuerarin (3''-oxo-puerarin), 3''-dehydroisoorientin (3''-oxo-homoorientin) and 3'-dehydromangiferin (3'-oxo-mangiferin). In Microbacterium sp, this protein is 3'-dehydrocarminate deglycosidase beta subunit.